The chain runs to 245 residues: UDP-N-acetyl-D-mannosaminuronic acid transferase (245 aa).

Belongs to the glycosyltransferase 26 family.

It catalyses the reaction UDP-N-acetyl-alpha-D-mannosaminouronate + N-acetyl-alpha-D-glucosaminyl-di-trans,octa-cis-undecaprenyl diphosphate = beta-D-ManNAcA-(1-&gt;4)-alpha-D-GlcNAc-di-trans,octa-cis-undecaprenyl diphosphate + UDP + H(+). The protein operates within bacterial outer membrane biogenesis; enterobacterial common antigen biosynthesis. In terms of biological role, catalyzes the synthesis of Und-PP-GlcNAc-ManNAcA (Lipid II), the second lipid-linked intermediate involved in enterobacterial common antigen (ECA) synthesis. The sequence is that of UDP-N-acetyl-D-mannosaminuronic acid transferase from Photorhabdus laumondii subsp. laumondii (strain DSM 15139 / CIP 105565 / TT01) (Photorhabdus luminescens subsp. laumondii).